The following is a 416-amino-acid chain: Glutamate dehydrogenase (416 aa).

The active site involves K105.

Belongs to the Glu/Leu/Phe/Val dehydrogenases family. As to quaternary structure, homohexamer.

The enzyme catalyses L-glutamate + NAD(+) + H2O = 2-oxoglutarate + NH4(+) + NADH + H(+). It catalyses the reaction L-glutamate + NADP(+) + H2O = 2-oxoglutarate + NH4(+) + NADPH + H(+). In Thermotoga maritima (strain ATCC 43589 / DSM 3109 / JCM 10099 / NBRC 100826 / MSB8), this protein is Glutamate dehydrogenase (gdhA).